Here is a 250-residue protein sequence, read N- to C-terminus: Small ribosomal subunit protein uS2 (250 aa).

This sequence belongs to the universal ribosomal protein uS2 family.

In Chloroherpeton thalassium (strain ATCC 35110 / GB-78), this protein is Small ribosomal subunit protein uS2.